The following is a 170-amino-acid chain: Cathelicidin antimicrobial peptide (170 aa).

An N-terminal signal peptide occupies residues M1–A30. Residues Q31–R131 constitute a propeptide, cathelin-like domain (CLD). Intrachain disulfides connect C86-C97 and C108-C125. The active core stretch occupies residues F150 to Q162.

It belongs to the cathelicidin family. In terms of assembly, monomer, homodimer or homotrimer (in vitro). Oligomerizes as tetra- or hexamer in solution (in vitro). Proteolytically cleaved by proteinase PRTN3 into antibacterial peptide LL-37. Proteolytically cleaved by cathepsin CTSG and neutrophil elastase ELANE. In terms of processing, resistant to proteolytic degradation in solution, and when bound to both zwitterionic (mimicking mammalian membranes) and negatively charged membranes (mimicking bacterial membranes). Post-translationally, after secretion onto the skin surface, the CAMP gene product is processed by a serine protease-dependent mechanism into multiple novel antimicrobial peptides distinct from and shorter than cathelicidin LL-37. These peptides show enhanced antimicrobial action, acquiring the ability to kill skin pathogens such as S.aureus, E.coli and C.albicans. These peptides have lost the ability to stimulate CXCL8/IL8 release from keratinocytes. The peptides act synergistically, killing bacteria at lower concentrations when present together, and maintain activity at increased salt condition.

Its subcellular location is the secreted. It is found in the vesicle. In terms of biological role, antimicrobial protein that is an integral component of the innate immune system. Binds to bacterial lipopolysaccharides (LPS). Acts via neutrophil N-formyl peptide receptors to enhance the release of CXCL2. Postsecretory processing generates multiple cathelicidin antimicrobial peptides with various lengths which act as a topical antimicrobial defense in sweat on skin. The unprocessed precursor form, cathelicidin antimicrobial peptide, inhibits the growth of Gram-negative E.coli and E.aerogenes with efficiencies comparable to that of the mature peptide LL-37 (in vitro). Functionally, antimicrobial peptide that is an integral component of the innate immune system. Binds to bacterial lipopolysaccharides (LPS). Causes membrane permeabilization by forming transmembrane pores (in vitro). Causes lysis of E.coli. Exhibits antimicrobial activity against Gram-negative bacteria such as P.aeruginosa, S.typhimurium, E.aerogenes, E.coli and P.syringae, Gram-positive bacteria such as L.monocytogenes, S.epidermidis, S.pyogenes and S.aureus, as well as vancomycin-resistant enterococci (in vitro). Exhibits antimicrobial activity against methicillin-resistant S.aureus, P.mirabilis, and C.albicans in low-salt media, but not in media containing 100 mM NaCl (in vitro). Forms chiral supramolecular assemblies with quinolone signal (PQS) molecules of P.aeruginosa, which may lead to interference of bacterial quorum signaling and perturbance of bacterial biofilm formation. May form supramolecular fiber-like assemblies on bacterial membranes. Induces cytokine and chemokine producation as well as TNF/TNFA and CSF2/GMCSF production in normal human keratinocytes. Exhibits hemolytic activity against red blood cells. Its function is as follows. Exhibits antimicrobial activity against E.coli and B.megaterium (in vitro). In Nomascus gabriellae (Red-cheeked gibbon), this protein is Cathelicidin antimicrobial peptide.